A 279-amino-acid chain; its full sequence is High choriolytic enzyme 2 (279 aa).

The N-terminal stretch at 1-20 (MNLASSACLLLLFLLGIAQA) is a signal peptide. Positions 21 to 79 (LPVQNEEGHEEGNKEGHGEEGVEEGDEDDFVDFTTRILTSNNNTDQLLLEGDLVAPTNR) are cleaved as a propeptide — activation peptide. Positions 26-40 (EEGHEEGNKEGHGEE) are enriched in basic and acidic residues. The segment at 26 to 46 (EEGHEEGNKEGHGEEGVEEGD) is disordered. An N-linked (GlcNAc...) asparagine glycan is attached at N62. One can recognise a Peptidase M12A domain in the interval 80–279 (NAMKCWYNSC…TRSNVLYNCR (200 aa)). Disulfide bonds link C84–C89, C129–C278, and C150–C170. H178 contacts Zn(2+). The active site involves E179. Zn(2+)-binding residues include H182 and H188.

Zn(2+) serves as cofactor.

It localises to the zymogen granule. It carries out the reaction Hydrolysis of the inner layer of fish egg envelope. Also hydrolysis of casein and small molecule substrates such as succinyl-Leu-Leu-Val-Tyr-|-7-(4-methyl)coumarylamide.. Its function is as follows. Participates in the breakdown of the egg envelope, which is derived from the egg extracellular matrix, at the time of hatching. Thus allowing the newly hatched fish to swim free. HCE binds tightly to the egg envelope while it exerts the choriolytic swelling action. The sequence is that of High choriolytic enzyme 2 (hceb) from Oryzias latipes (Japanese rice fish).